Consider the following 220-residue polypeptide: Probable cytidylate kinase (220 aa).

10-18 (GPAASGKSS) lines the ATP pocket.

The protein belongs to the cytidylate kinase family. Type 1 subfamily.

The enzyme catalyses CMP + ATP = CDP + ADP. The catalysed reaction is dCMP + ATP = dCDP + ADP. The protein is Probable cytidylate kinase of Encephalitozoon cuniculi (strain GB-M1) (Microsporidian parasite).